An 898-amino-acid chain; its full sequence is Netrin receptor UNC5A (898 aa).

The signal sequence occupies residues 1–25; that stretch reads MAVRPGLWPVLLGIVLAAWLRGSGA. Residues 26 to 361 are Extracellular-facing; that stretch reads QQSATVANPV…TASCPEDVAL (336 aa). Residues 44-141 enclose the Ig-like domain; that stretch reads PHFLVEPEDV…SGTTKSQKAY (98 aa). 3 disulfides stabilise this stretch: Cys65/Cys126, Cys77/Cys124, and Cys170/Cys221. N-linked (GlcNAc...) asparagine glycosylation is found at Asn107 and Asn218. The Ig-like C2-type domain maps to 155–238; that stretch reads PLAKEVSLEQ…RRRSTSAAVI (84 aa). TSP type-1 domains lie at 242–296 and 298–350; these read NGGW…TLCP and DGSW…DLCL. Trp245, Trp248, and Trp251 each carry a C-linked (Man) tryptophan glycan. 3 cysteine pairs are disulfide-bonded: Cys254/Cys291, Cys258/Cys295, and Cys269/Cys281. 2 C-linked (Man) tryptophan glycosylation sites follow: Trp301 and Trp304. 3 cysteine pairs are disulfide-bonded: Cys310–Cys344, Cys314–Cys349, and Cys322–Cys334. An N-linked (GlcNAc...) asparagine glycan is attached at Asn343. A helical membrane pass occupies residues 362–382; the sequence is YIGLVAVAVCLFLLLLALGLI. Topologically, residues 383 to 898 are cytoplasmic; it reads YCRKKEGLDS…GLFTVSEAEC (516 aa). The region spanning 497–640 is the ZU5 domain; sequence NMAYGTFNFL…LGRFALVGEA (144 aa). Positions 661–679 are interaction with DCC; the sequence is SLEYNIRVYCLHDTHDALK. The Death domain maps to 817–897; the sequence is QKIIASLDPP…AGLFTVSEAE (81 aa).

It belongs to the unc-5 family. As to quaternary structure, homodimer and homooligomer. Interacts with the cytoplasmic part of DCC. Interacts with MAGED1. Interacts with PRKCABP, possibly mediating some interaction with PKC. Interacts (via extracellular domain) with FLRT2 (via extracellular domain). Interacts (via extracellular domain) with FLRT3 (via extracellular domain). In terms of processing, phosphorylated on cytoplasmic tyrosine residues. Phosphorylated by PKC in vitro. Post-translationally, proteolytically cleaved by caspases during apoptosis. The cleavage does not take place when the receptor is associated with netrin ligand. Its cleavage by caspases is required to induce apoptosis. The two extracellular TSRs of UNC5A contain WxxWxxWxxC motifs that can be C-mannosylated on all tryptophans. DPY19L1 preferentially mannosylates the first two tryptophans and DPY19L3 prefers the third. C-mannosylation by DPY19L1 is required for transport of UNC5A from the endoplasmic reticulum to the cell surface. In terms of tissue distribution, mainly expressed in regions of differentiating neurons. Expressed at early stages of neural tube development in the ventral spinal cord. In developing hindbrain, it colocalizes with a number of cranial motor neuron subpopulations from embryonic E11 to E14, while DCC is expressed by motor neurons at E12. Also expressed in non-neural structures, such as the basal plane of the hindbrain and midbrain, in the developing hypothalamus, thalamus and in the pallidum.

Its subcellular location is the cell membrane. It is found in the membrane raft. The protein localises to the cell projection. It localises to the neuron projection. In terms of biological role, receptor for netrin required for axon guidance. Functions in the netrin signaling pathway and promotes neurite outgrowth in response to NTN1. Mediates axon repulsion of neuronal growth cones in the developing nervous system in response to netrin. Axon repulsion in growth cones may be mediated by its association with DCC that may trigger signaling for repulsion. It also acts as a dependence receptor required for apoptosis induction when not associated with netrin ligand. The polypeptide is Netrin receptor UNC5A (Unc5a) (Rattus norvegicus (Rat)).